The chain runs to 305 residues: Glutaminase (305 aa).

The substrate site is built by Ser63, Asn113, Glu158, Asn165, Tyr189, Tyr241, and Val259.

This sequence belongs to the glutaminase family. In terms of assembly, homotetramer.

The enzyme catalyses L-glutamine + H2O = L-glutamate + NH4(+). This chain is Glutaminase, found in Aliarcobacter butzleri (strain RM4018) (Arcobacter butzleri).